We begin with the raw amino-acid sequence, 340 residues long: Glycerol-3-phosphate dehydrogenase [NAD(P)+] (340 aa).

4 residues coordinate NADPH: Ser-11, Trp-12, Arg-33, and Lys-106. Sn-glycerol 3-phosphate-binding residues include Lys-106, Gly-137, and Ser-139. Residue Ala-141 coordinates NADPH. 5 residues coordinate sn-glycerol 3-phosphate: Lys-192, Asp-245, Ser-255, Arg-256, and Asn-257. Residue Lys-192 is the Proton acceptor of the active site. Residue Arg-256 coordinates NADPH. NADPH is bound by residues Val-280 and Glu-282.

This sequence belongs to the NAD-dependent glycerol-3-phosphate dehydrogenase family.

The protein localises to the cytoplasm. It catalyses the reaction sn-glycerol 3-phosphate + NAD(+) = dihydroxyacetone phosphate + NADH + H(+). The enzyme catalyses sn-glycerol 3-phosphate + NADP(+) = dihydroxyacetone phosphate + NADPH + H(+). It participates in membrane lipid metabolism; glycerophospholipid metabolism. Its function is as follows. Catalyzes the reduction of the glycolytic intermediate dihydroxyacetone phosphate (DHAP) to sn-glycerol 3-phosphate (G3P), the key precursor for phospholipid synthesis. In Bacillus cereus (strain ATCC 10987 / NRS 248), this protein is Glycerol-3-phosphate dehydrogenase [NAD(P)+].